The sequence spans 592 residues: Calnexin (592 aa).

A signal peptide spans 1–20; sequence MEGKWLLCMLLVLGTAIVEA. Residues 21 to 481 are Lumenal-facing; sequence HDGHDDDVID…QMIEAAEERP (461 aa). Ca(2+) contacts are provided by S74 and D117. At K137 the chain carries N6-acetyllysine. A disulfide bridge connects residues C160 and C194. An alpha-D-glucoside contacts are provided by Y164, K166, Y185, and D192. The tract at residues 260 to 345 is disordered; that stretch reads GNLLNDMTPP…AEKPEDWDED (86 aa). The span at 274 to 319 shows a compositional bias: basic and acidic residues; that stretch reads REIEDPEDRKPEDWDERPKIPDPEAVKPDDWDEDAPAKIPDEEATK. Positions 276-409 are p domain (Extended arm); that stretch reads IEDPEDRKPE…RKIPNPDFFE (134 aa). 5 tandem repeats follow at residues 278–290, 295–307, 314–326, 333–345, and 348–358. 4 X approximate repeats regions lie at residues 278–345 and 348–405; these read DPED…WDED and GEWE…IPNP. Residues 323–345 show a composition bias toward acidic residues; sequence WLDDEPEYVPDPDAEKPEDWDED. Residues 326–359 form an interaction with PPIB region; the sequence is DEPEYVPDPDAEKPEDWDEDMDGEWEAPQIANPR. Cysteines 360 and 366 form a disulfide. A run of 3 repeats spans residues 367–377, 381–391, and 395–405. Residue E425 coordinates an alpha-D-glucoside. D436 lines the Ca(2+) pocket. A helical transmembrane segment spans residues 482–502; sequence WLWVVYILTVALPVFLVILFC. Residues C502 and C503 are each lipidated (S-palmitoyl cysteine). Residues 503 to 592 lie on the Cytoplasmic side of the membrane; it reads CSGKKQTSGM…SPRNRKPRRE (90 aa). The tract at residues 503 to 592 is sufficient to mediate interaction with SGIP1; it reads CSGKKQTSGM…SPRNRKPRRE (90 aa). The interval 511-592 is disordered; sequence GMEYKKTDAP…SPRNRKPRRE (82 aa). The span at 525–547 shows a compositional bias: acidic residues; the sequence is KEEEEEKEEEKDKGDEEEEGEEK. At S554 the chain carries Phosphoserine. T562 bears the Phosphothreonine mark. Residue S564 is modified to Phosphoserine; by MAPK3. Position 583 is a phosphoserine (S583).

It belongs to the calreticulin family. As to quaternary structure, interacts with MAPK3/ERK1. Interacts with KCNH2. Associates with ribosomes. Interacts with SGIP1; involved in negative regulation of endocytosis. The palmitoylated form interacts with the ribosome-translocon complex component SSR1, promoting efficient folding of glycoproteins. Interacts with SERPINA2P/SERPINA2 and with the S and Z variants of SERPINA1. Interacts with PPIB. Interacts with ZNRF4. Interacts with SMIM22. Interacts with TMX2. Interacts with TMEM35A/NACHO. Interacts with CHRNA7. Interacts with reticulophagy regulators RETREG2 and RETREG3. Interacts with DNM1L; may form part of a larger protein complex at the ER-mitochondrial interface during mitochondrial fission. Interacts with ADAM7. In terms of assembly, (Microbial infection) Interacts with HBV large envelope protein, isoform L. (Microbial infection) Interacts with HBV large envelope protein, isoform M; this association may be essential for isoform M proper secretion. Post-translationally, phosphorylated at Ser-564 by MAPK3/ERK1. Phosphorylation by MAPK3/ERK1 increases its association with ribosomes. Palmitoylation by DHHC6 leads to the preferential localization to the perinuclear rough ER. It mediates the association of calnexin with the ribosome-translocon complex (RTC) which is required for efficient folding of glycosylated proteins. In terms of processing, ubiquitinated, leading to proteasomal degradation. Probably ubiquitinated by ZNRF4.

The protein localises to the endoplasmic reticulum membrane. Its subcellular location is the mitochondrion membrane. It is found in the melanosome membrane. Functionally, calcium-binding protein that interacts with newly synthesized monoglucosylated glycoproteins in the endoplasmic reticulum. It may act in assisting protein assembly and/or in the retention within the ER of unassembled protein subunits. It seems to play a major role in the quality control apparatus of the ER by the retention of incorrectly folded proteins. Associated with partial T-cell antigen receptor complexes that escape the ER of immature thymocytes, it may function as a signaling complex regulating thymocyte maturation. Additionally it may play a role in receptor-mediated endocytosis at the synapse. The protein is Calnexin (CANX) of Homo sapiens (Human).